Reading from the N-terminus, the 339-residue chain is Anthranilate phosphoribosyltransferase (339 aa).

Residues Gly80, 83–84 (GD), Thr88, 90–93 (NIST), 108–116 (KHGNRAMSS), and Ser120 contribute to the 5-phospho-alpha-D-ribose 1-diphosphate site. Gly80 serves as a coordination point for anthranilate. Ser92 lines the Mg(2+) pocket. Position 111 (Asn111) interacts with anthranilate. Arg166 is a binding site for anthranilate. Residues Asp225 and Glu226 each coordinate Mg(2+).

This sequence belongs to the anthranilate phosphoribosyltransferase family. As to quaternary structure, homodimer. It depends on Mg(2+) as a cofactor.

It carries out the reaction N-(5-phospho-beta-D-ribosyl)anthranilate + diphosphate = 5-phospho-alpha-D-ribose 1-diphosphate + anthranilate. It participates in amino-acid biosynthesis; L-tryptophan biosynthesis; L-tryptophan from chorismate: step 2/5. Its function is as follows. Catalyzes the transfer of the phosphoribosyl group of 5-phosphorylribose-1-pyrophosphate (PRPP) to anthranilate to yield N-(5'-phosphoribosyl)-anthranilate (PRA). The chain is Anthranilate phosphoribosyltransferase from Chloroflexus aurantiacus (strain ATCC 29366 / DSM 635 / J-10-fl).